Consider the following 497-residue polypeptide: Cobyric acid synthase (497 aa).

One can recognise a GATase cobBQ-type domain in the interval 257–431 (WLRVAAVRLP…WHGLLDNDDF (175 aa)). Cys-338 (nucleophile) is an active-site residue. Residue His-423 is part of the active site.

The protein belongs to the CobB/CobQ family. CobQ subfamily.

It participates in cofactor biosynthesis; adenosylcobalamin biosynthesis. Catalyzes amidations at positions B, D, E, and G on adenosylcobyrinic A,C-diamide. NH(2) groups are provided by glutamine, and one molecule of ATP is hydrogenolyzed for each amidation. This is Cobyric acid synthase from Mycolicibacterium paratuberculosis (strain ATCC BAA-968 / K-10) (Mycobacterium paratuberculosis).